Reading from the N-terminus, the 758-residue chain is G-protein alpha subunit activating protein gbas-1 (758 aa).

Positions 30–48 (LDEVDNADFEREDDEEEVL) are enriched in acidic residues. A disordered region spans residues 30–70 (LDEVDNADFEREDDEEEVLSEPSESPYTSTPKSSKRVNKTR). A compositionally biased stretch (low complexity) spans 49 to 61 (SEPSESPYTSTPK). The GBA motif lies at 653–666 (ETVTVEEFLMNSYS). A disordered region spans residues 668 to 690 (AAPSTSTAPAPPKAPVTAPPAPQ). Residues 676 to 689 (PAPPKAPVTAPPAP) show a composition bias toward pro residues.

In terms of assembly, interacts (via GBA motif) with guanine nucleotide-binding protein G(o) subunit alpha goa-1 (in GDP-bound form); the interaction leads to activation of goa-1. Expressed in some neurons including the head and tail neurons, HSN and VC, in a subset of glial cells, in the distal tips cells and in the intestine.

In terms of biological role, acts as a non-receptor guanine nucleotide exchange factor which binds to and activates G-protein alpha subunit goa-1. The sequence is that of G-protein alpha subunit activating protein gbas-1 from Caenorhabditis elegans.